Consider the following 158-residue polypeptide: NAD(P)H-quinone oxidoreductase subunit J, chloroplastic (158 aa).

It belongs to the complex I 30 kDa subunit family. NDH is composed of at least 16 different subunits, 5 of which are encoded in the nucleus.

The protein localises to the plastid. The protein resides in the chloroplast thylakoid membrane. The catalysed reaction is a plastoquinone + NADH + (n+1) H(+)(in) = a plastoquinol + NAD(+) + n H(+)(out). It carries out the reaction a plastoquinone + NADPH + (n+1) H(+)(in) = a plastoquinol + NADP(+) + n H(+)(out). In terms of biological role, NDH shuttles electrons from NAD(P)H:plastoquinone, via FMN and iron-sulfur (Fe-S) centers, to quinones in the photosynthetic chain and possibly in a chloroplast respiratory chain. The immediate electron acceptor for the enzyme in this species is believed to be plastoquinone. Couples the redox reaction to proton translocation, and thus conserves the redox energy in a proton gradient. This is NAD(P)H-quinone oxidoreductase subunit J, chloroplastic from Jasminum nudiflorum (Winter jasmine).